The primary structure comprises 117 residues: Non-specific lipid-transfer protein 2 (117 aa).

Positions 1–25 are cleaved as a signal peptide; the sequence is MAGLMKLACLVLACMIVAGPITSNA. 4 disulfide bridges follow: Cys-29/Cys-76, Cys-39/Cys-53, Cys-54/Cys-99, and Cys-74/Cys-113.

Belongs to the plant LTP family.

In terms of biological role, plant non-specific lipid-transfer proteins transfer phospholipids as well as galactolipids across membranes. May play a role in wax or cutin deposition in the cell walls of expanding epidermal cells and certain secretory tissues. In Brassica napus (Rape), this protein is Non-specific lipid-transfer protein 2 (LTP2).